Consider the following 129-residue polypeptide: LTEELRTFPINAQGDTAVLSLKEIKKGQQVFNAACAQCHALGVTRTNPDVNLSPEALALATPPRDNIAALVDYIKNPTTYDGFVEISELHPSLKSSDIFPKMRNISEDDLYNVAGYILLQPKVRGEQWG.

4 residues coordinate heme c: C35, C38, H39, and H90.

The protein belongs to the cytochrome c family. PsbV subfamily. As to quaternary structure, PSII is composed of 1 copy each of membrane proteins PsbA, PsbB, PsbC, PsbD, PsbE, PsbF, PsbH, PsbI, PsbJ, PsbK, PsbL, PsbM, PsbT, PsbX, PsbY, PsbZ, Psb30/Ycf12, peripheral proteins PsbO, CyanoQ (PsbQ), PsbU, PsbV and a large number of cofactors. It forms dimeric complexes. Homodimer in crystal structure. Requires heme c as cofactor.

It is found in the cellular thylakoid membrane. Its function is as follows. One of the extrinsic, lumenal subunits of photosystem II (PSII). PSII is a light-driven water plastoquinone oxidoreductase, using light energy to abstract electrons from H(2)O, generating a proton gradient subsequently used for ATP formation. The extrinsic proteins stabilize the structure of photosystem II oxygen-evolving complex (OEC), the ion environment of oxygen evolution and protect the OEC against heat-induced inactivation. Low-potential cytochrome c that plays a role in the OEC of PSII. In Limnospira maxima (Arthrospira maxima), this protein is Photosystem II extrinsic protein V.